The primary structure comprises 445 residues: Chromosomal replication initiator protein DnaA (445 aa).

The domain I, interacts with DnaA modulators stretch occupies residues 1–73 (MSTHLTETWE…VNALKLLTSK (73 aa)). The tract at residues 73–106 (KKYNIDFIVTTEEKIEKNHNNEKSNIVVNDEMST) is domain II. A domain III, AAA+ region region spans residues 107-323 (MLNPKYTFDS…GALIRIVAFS (217 aa)). Residues glycine 151, glycine 153, lysine 154, and threonine 155 each coordinate ATP. The domain IV, binds dsDNA stretch occupies residues 324 to 445 (SLTNKEISVD…KELNKRINQK (122 aa)).

It belongs to the DnaA family. As to quaternary structure, oligomerizes as a right-handed, spiral filament on DNA at oriC.

It localises to the cytoplasm. Its function is as follows. Plays an essential role in the initiation and regulation of chromosomal replication. ATP-DnaA binds to the origin of replication (oriC) to initiate formation of the DNA replication initiation complex once per cell cycle. Binds the DnaA box (a 9 base pair repeat at the origin) and separates the double-stranded (ds)DNA. Forms a right-handed helical filament on oriC DNA; dsDNA binds to the exterior of the filament while single-stranded (ss)DNA is stabiized in the filament's interior. The ATP-DnaA-oriC complex binds and stabilizes one strand of the AT-rich DNA unwinding element (DUE), permitting loading of DNA polymerase. After initiation quickly degrades to an ADP-DnaA complex that is not apt for DNA replication. Binds acidic phospholipids. The protein is Chromosomal replication initiator protein DnaA of Clostridium botulinum (strain Okra / Type B1).